Consider the following 160-residue polypeptide: MTISKNNKMMAHLNYRMKIILQDGRTFIGFFKAFDKHMNILLAECEEHRQIKPKAGKKTDGEEKRILGLVLVRGEHIVSMTVDGPPPRDDDSVRLAKAGGAGGVGQAKPGGRGMPAMPGMPGMPPGGAPGGLSGAMRGHGGPGMAAMQPGYGGPPGGRPF.

The Sm domain occupies 4 to 86 (SKNNKMMAHL…IVSMTVDGPP (83 aa)). Residues 80–160 (MTVDGPPPRD…YGGPPGGRPF (81 aa)) are disordered. 3 stretches are compositionally biased toward gly residues: residues 99–113 (GGAG…GGRG), 128–143 (APGG…GGPG), and 150–160 (GYGGPPGGRPF).

Belongs to the snRNP SmB/SmN family.

The protein resides in the nucleus. It localises to the cytoplasm. It is found in the cytosol. In terms of biological role, plays a role in pre-mRNA splicing as a core component of the spliceosomal U1, U2, U4 and U5 small nuclear ribonucleoproteins (snRNPs), the building blocks of the spliceosome. The protein is Probable small nuclear ribonucleoprotein-associated protein B (snr-2) of Caenorhabditis elegans.